The sequence spans 31 residues: Cytochrome b6-f complex subunit 6 (31 aa).

A helical membrane pass occupies residues 3-23 (IAIDYFLLVGFCFAFTSGLYL).

Belongs to the PetL family. In terms of assembly, the 4 large subunits of the cytochrome b6-f complex are cytochrome b6, subunit IV (17 kDa polypeptide, PetD), cytochrome f and the Rieske protein, while the 4 small subunits are PetG, PetL, PetM and PetN. The complex functions as a dimer.

The protein localises to the plastid. It is found in the chloroplast thylakoid membrane. Functionally, component of the cytochrome b6-f complex, which mediates electron transfer between photosystem II (PSII) and photosystem I (PSI), cyclic electron flow around PSI, and state transitions. PetL is important for photoautotrophic growth as well as for electron transfer efficiency and stability of the cytochrome b6-f complex. The protein is Cytochrome b6-f complex subunit 6 of Trieres chinensis (Marine centric diatom).